The sequence spans 188 residues: Elongation factor P (188 aa).

Residue Lys-34 is modified to N6-(3,6-diaminohexanoyl)-5-hydroxylysine.

This sequence belongs to the elongation factor P family. Post-translationally, may be beta-lysylated on the epsilon-amino group of Lys-34 by the combined action of EpmA and EpmB, and then hydroxylated on the C5 position of the same residue by EpmC (if this protein is present). Lysylation is critical for the stimulatory effect of EF-P on peptide-bond formation. The lysylation moiety may extend toward the peptidyltransferase center and stabilize the terminal 3-CCA end of the tRNA. Hydroxylation of the C5 position on Lys-34 may allow additional potential stabilizing hydrogen-bond interactions with the P-tRNA.

The protein resides in the cytoplasm. The protein operates within protein biosynthesis; polypeptide chain elongation. Functionally, involved in peptide bond synthesis. Alleviates ribosome stalling that occurs when 3 or more consecutive Pro residues or the sequence PPG is present in a protein, possibly by augmenting the peptidyl transferase activity of the ribosome. Modification of Lys-34 is required for alleviation. This chain is Elongation factor P, found in Pseudoalteromonas translucida (strain TAC 125).